Reading from the N-terminus, the 251-residue chain is Hydroxyacylglutathione hydrolase (251 aa).

Zn(2+)-binding residues include H53, H55, D57, H58, H109, D126, and H164.

The protein belongs to the metallo-beta-lactamase superfamily. Glyoxalase II family. In terms of assembly, monomer. Requires Zn(2+) as cofactor.

The enzyme catalyses an S-(2-hydroxyacyl)glutathione + H2O = a 2-hydroxy carboxylate + glutathione + H(+). Its pathway is secondary metabolite metabolism; methylglyoxal degradation; (R)-lactate from methylglyoxal: step 2/2. Functionally, thiolesterase that catalyzes the hydrolysis of S-D-lactoyl-glutathione to form glutathione and D-lactic acid. This is Hydroxyacylglutathione hydrolase from Wigglesworthia glossinidia brevipalpis.